Consider the following 97-residue polypeptide: U-reduvitoxin-Pr10a (97 aa).

An N-terminal signal peptide occupies residues 1–18 (MKTALFLVFALAFIAVEG). Pacifastin domains are found at residues 22 to 59 (KACS…CPPR) and 62 to 97 (KQSC…RLCW). Intrachain disulfides connect Cys24-Cys42, Cys37-Cys56, and Cys40-Cys51. Residues 57–59 (PPR) form a pro-Pro-Arg motif necessary for proteolytic processing region. 3 disulfide bridges follow: Cys65–Cys82, Cys77–Cys96, and Cys80–Cys91.

It belongs to the protease inhibitor I19 family. In terms of tissue distribution, expressed by the venom gland.

The protein localises to the secreted. Functionally, inhibits trypsin activity and prophenoloxidase (PPO) activation, an enzyme essential for both clotting and insect innate immune responses. It does not inhibit activity of chymotrypsin and protease K, and has no effect on phenoloxidase (PO) activity. This chain is U-reduvitoxin-Pr10a, found in Platymeris rhadamanthus (Red spot assassin bug).